We begin with the raw amino-acid sequence, 238 residues long: MSGESISTFQFLGLTFNTTNLISGLVSALIVFCVVFALSRNLKLKPTGKQNILEWIVDFTNGILRDSVDEEEEKNFGLYAFTLFLFIFVSNQIGLFLQIAWNDVSYLRSPTADPIVTLTLSLITMMLAHYSGVAKFGFKKYFEKTYLSPFKVWLPIGVFTEFIDFLTLGLRIYGVIFAGEMLLKMIGGIAFSGGIVNMIVAIPLALIWQGFSVFLGSIQAFVFVTLTSVYISHKVEDE.

The next 6 membrane-spanning stretches (helical) occupy residues 18 to 38 (TTNL…VFAL), 76 to 96 (FGLY…IGLF), 114 to 134 (PIVT…SGVA), 150 to 170 (FKVW…TLGL), 188 to 208 (GIAF…ALIW), and 211 to 231 (FSVF…SVYI).

The protein belongs to the ATPase A chain family. In terms of assembly, F-type ATPases have 2 components, CF(1) - the catalytic core - and CF(0) - the membrane proton channel. CF(1) has five subunits: alpha(3), beta(3), gamma(1), delta(1), epsilon(1). CF(0) has three main subunits: a(1), b(2) and c(9-12). The alpha and beta chains form an alternating ring which encloses part of the gamma chain. CF(1) is attached to CF(0) by a central stalk formed by the gamma and epsilon chains, while a peripheral stalk is formed by the delta and b chains.

Its subcellular location is the cell membrane. Its function is as follows. Key component of the proton channel; it plays a direct role in the translocation of protons across the membrane. This chain is ATP synthase subunit a, found in Pediococcus pentosaceus (strain ATCC 25745 / CCUG 21536 / LMG 10740 / 183-1w).